A 399-amino-acid polypeptide reads, in one-letter code: Elongation factor Tu (399 aa).

In terms of domain architecture, tr-type G spans 10-204 (KPHVNIGTIG…AVDASIPEPE (195 aa)). A G1 region spans residues 19 to 26 (GHVDHGKT). 19–26 (GHVDHGKT) is a GTP binding site. Position 26 (Thr26) interacts with Mg(2+). The segment at 60–64 (GITIN) is G2. The G3 stretch occupies residues 81-84 (DCPG). GTP-binding positions include 81–85 (DCPGH) and 136–139 (NKCD). The G4 stretch occupies residues 136-139 (NKCD). The tract at residues 174–176 (SGL) is G5.

This sequence belongs to the TRAFAC class translation factor GTPase superfamily. Classic translation factor GTPase family. EF-Tu/EF-1A subfamily. As to quaternary structure, monomer.

It localises to the cytoplasm. The catalysed reaction is GTP + H2O = GDP + phosphate + H(+). In terms of biological role, GTP hydrolase that promotes the GTP-dependent binding of aminoacyl-tRNA to the A-site of ribosomes during protein biosynthesis. In Synechococcus sp. (strain CC9902), this protein is Elongation factor Tu.